A 780-amino-acid polypeptide reads, in one-letter code: Vezatin (780 aa).

The next 2 helical transmembrane spans lie at 140 to 160 and 162 to 182; these read ATPN…LIMF and TCWI…YLII. Positions 430–467 form a coiled coil; sequence VRSLQLHLKALLNEVIILEDELEKLVCTKETQELLSEA. Disordered regions lie at residues 620-718 and 757-780; these read DPVE…PRDT and QEQT…VEEK. The span at 624–643 shows a compositional bias: polar residues; it reads SVSNSEPPMNSDTEKVNSNA. Basic and acidic residues-rich tracts occupy residues 647–663 and 690–699; these read ETSK…RTEY and TMCHQHESEA. Residues 702–711 show a composition bias toward low complexity; it reads PQAAAAGATA. The segment covering 761–780 has biased composition (acidic residues); the sequence is FGDEEEEQLVEGGENEVEEK.

This sequence belongs to the vezatin family. In terms of assembly, interacts with USH2A (via the cytoplasmic region); the interaction associates VEZT with the USH2 complex at the stereocilia base. Interacts with myosin MYO7A and the cadherin-catenins complex. Expressed in developing cochlear hair cells. Isoform 1, isoform 2 and isoform 3 are expressed in testis. In the seminiferous epithelium, present exclusively in the acrosome of spermatids (at protein level).

It localises to the cell membrane. The protein resides in the cell projection. It is found in the stereocilium membrane. The protein localises to the cell junction. Its subcellular location is the adherens junction. It localises to the nucleus. The protein resides in the cytoplasmic vesicle. It is found in the secretory vesicle. The protein localises to the acrosome. Functionally, plays a pivotal role in the establishment of adherens junctions and their maintenance in adult life. Required for morphogenesis of the preimplantation embryo, and for the implantation process. In Mus musculus (Mouse), this protein is Vezatin.